Consider the following 246-residue polypeptide: MRYKAVVEYEGTSFIGWQRQHGVVGKSVQESIERSIKEFCQQSVIVYAAGRTDAGVHATGQVVHFDLKVSREDYVIKNALNHYLRNEKVSILQLERVDEEFHARFSAKKRHYTYKISNREAPLCIDLMRMWHVPKRLNVENMREAASYIVGKHDFASFRAKDCQSKSSIKTVDSIDIIAAEEEININISAQSFLHKQVRITVGTFVECGMGLYPPAHVLEILEKKDRAAAGITAPAHGLYLTRVDY.

Residue aspartate 53 is the Nucleophile of the active site. Tyrosine 112 lines the substrate pocket.

The protein belongs to the tRNA pseudouridine synthase TruA family. As to quaternary structure, homodimer.

It carries out the reaction uridine(38/39/40) in tRNA = pseudouridine(38/39/40) in tRNA. In terms of biological role, formation of pseudouridine at positions 38, 39 and 40 in the anticodon stem and loop of transfer RNAs. This Anaplasma phagocytophilum (strain HZ) protein is tRNA pseudouridine synthase A.